The primary structure comprises 153 residues: MAKLTILIALVAALVLVVHTSAFQSSKQSCKRQLQQVNLRHCENHIAQRIQQQQEEEEDHALKLRGIKHVILRHRSSQEYSEESEELDQCCEQLNELNSQRCQCRALQQIYESQSEQCEGSQQEQQLEQELEKLPRTCGFGPLRRCDVNPDEE.

The first 22 residues, 1–22 (MAKLTILIALVAALVLVVHTSA), serve as a signal peptide directing secretion. Intrachain disulfides connect Cys-30-Cys-102, Cys-42-Cys-90, Cys-91-Cys-138, and Cys-104-Cys-146.

This sequence belongs to the 2S seed storage albumins family. Heterodimer of a small chain and a large chain; disulfide-linked. In terms of tissue distribution, expressed in developing cotyledons (at protein level).

The protein localises to the endoplasmic reticulum. This chain is Conglutin delta 2, found in Lupinus angustifolius (Narrow-leaved blue lupine).